We begin with the raw amino-acid sequence, 255 residues long: Ribosomal RNA small subunit methyltransferase A (255 aa).

S-adenosyl-L-methionine-binding residues include N11, L13, G38, E59, D83, and N101.

The protein belongs to the class I-like SAM-binding methyltransferase superfamily. rRNA adenine N(6)-methyltransferase family. RsmA subfamily.

It is found in the cytoplasm. The enzyme catalyses adenosine(1518)/adenosine(1519) in 16S rRNA + 4 S-adenosyl-L-methionine = N(6)-dimethyladenosine(1518)/N(6)-dimethyladenosine(1519) in 16S rRNA + 4 S-adenosyl-L-homocysteine + 4 H(+). Its function is as follows. Specifically dimethylates two adjacent adenosines (A1518 and A1519) in the loop of a conserved hairpin near the 3'-end of 16S rRNA in the 30S particle. May play a critical role in biogenesis of 30S subunits. The sequence is that of Ribosomal RNA small subunit methyltransferase A from Thiobacillus denitrificans (strain ATCC 25259 / T1).